The chain runs to 251 residues: Aspartate/glutamate leucyltransferase (251 aa).

This sequence belongs to the R-transferase family. Bpt subfamily.

Its subcellular location is the cytoplasm. The catalysed reaction is N-terminal L-glutamyl-[protein] + L-leucyl-tRNA(Leu) = N-terminal L-leucyl-L-glutamyl-[protein] + tRNA(Leu) + H(+). The enzyme catalyses N-terminal L-aspartyl-[protein] + L-leucyl-tRNA(Leu) = N-terminal L-leucyl-L-aspartyl-[protein] + tRNA(Leu) + H(+). In terms of biological role, functions in the N-end rule pathway of protein degradation where it conjugates Leu from its aminoacyl-tRNA to the N-termini of proteins containing an N-terminal aspartate or glutamate. The chain is Aspartate/glutamate leucyltransferase from Stenotrophomonas maltophilia (strain R551-3).